A 504-amino-acid chain; its full sequence is Glycerol kinase (504 aa).

T14 contacts ADP. ATP-binding residues include T14, T15, and S16. T14 provides a ligand contact to sn-glycerol 3-phosphate. R18 is a binding site for ADP. R84, E85, Y136, and D246 together coordinate sn-glycerol 3-phosphate. Residues R84, E85, Y136, D246, and Q247 each coordinate glycerol. The ADP site is built by T268 and G311. ATP contacts are provided by T268, G311, Q315, and G412. The ADP site is built by G412 and N416.

The protein belongs to the FGGY kinase family.

It carries out the reaction glycerol + ATP = sn-glycerol 3-phosphate + ADP + H(+). It participates in polyol metabolism; glycerol degradation via glycerol kinase pathway; sn-glycerol 3-phosphate from glycerol: step 1/1. With respect to regulation, inhibited by fructose 1,6-bisphosphate (FBP). Its function is as follows. Key enzyme in the regulation of glycerol uptake and metabolism. Catalyzes the phosphorylation of glycerol to yield sn-glycerol 3-phosphate. This chain is Glycerol kinase, found in Aliivibrio salmonicida (strain LFI1238) (Vibrio salmonicida (strain LFI1238)).